Consider the following 403-residue polypeptide: Fasciclin-like arabinogalactan protein 2 (403 aa).

An N-terminal signal peptide occupies residues 1–26 (MAYLRRAATALVLIFQLHLFLSLSNA). FAS1 domains lie at 27–174 (HNIT…SQVL) and 187–326 (SDLI…DKVL). Residues N28, N130, N164, and N248 are each glycosylated (N-linked (GlcNAc...) asparagine). The interval 338–371 (SAPAPKSSKKKPKNAEADADGPSADAPSDDDVEV) is disordered. A378 is lipidated: GPI-anchor amidated alanine. The propeptide at 379-403 (VSAMITRTSNVVTAIVGLCFGVWLM) is removed in mature form.

Belongs to the fasciclin-like AGP family. In terms of tissue distribution, expressed mainly in flowers and to a lesser extent in leaves and roots.

The protein localises to the cell membrane. Its function is as follows. May be a cell surface adhesion protein. This is Fasciclin-like arabinogalactan protein 2 (FLA2) from Arabidopsis thaliana (Mouse-ear cress).